Consider the following 269-residue polypeptide: uncharacterized protein (269 aa).

The 76-residue stretch at 14 to 89 (FEYEIQVNRP…KLREPRLRDR (76 aa)) folds into the ACT domain.

This is an uncharacterized protein from Bacillus subtilis (strain 168).